Reading from the N-terminus, the 93-residue chain is HssA/B-like protein 26 (93 aa).

It belongs to the hssA/B family.

The polypeptide is HssA/B-like protein 26 (hssl26) (Dictyostelium discoideum (Social amoeba)).